Consider the following 266-residue polypeptide: Cytosolic Fe-S cluster assembly factor Nubp2 homolog (266 aa).

14-21 serves as a coordination point for ATP; that stretch reads GKGGVGKS. Residues Cys-188 and Cys-191 each coordinate [4Fe-4S] cluster.

Belongs to the Mrp/NBP35 ATP-binding proteins family. Nubp2/CFD1 subfamily. In terms of assembly, heterotetramer of 2 Nubp1 and 2 Nubp2 chains. [4Fe-4S] cluster serves as cofactor.

The protein localises to the cytoplasm. Functionally, component of the cytosolic iron-sulfur (Fe/S) protein assembly (CIA) machinery. Required for maturation of extramitochondrial Fe-S proteins. The Nubp1-Nubp2 heterotetramer forms a Fe-S scaffold complex, mediating the de novo assembly of an Fe-S cluster and its transfer to target apoproteins. The chain is Cytosolic Fe-S cluster assembly factor Nubp2 homolog from Drosophila virilis (Fruit fly).